Here is a 122-residue protein sequence, read N- to C-terminus: Ribosome-binding factor A (122 aa).

The protein belongs to the RbfA family. As to quaternary structure, monomer. Binds 30S ribosomal subunits, but not 50S ribosomal subunits or 70S ribosomes.

Its subcellular location is the cytoplasm. Functionally, one of several proteins that assist in the late maturation steps of the functional core of the 30S ribosomal subunit. Associates with free 30S ribosomal subunits (but not with 30S subunits that are part of 70S ribosomes or polysomes). Required for efficient processing of 16S rRNA. May interact with the 5'-terminal helix region of 16S rRNA. The polypeptide is Ribosome-binding factor A (Opitutus terrae (strain DSM 11246 / JCM 15787 / PB90-1)).